A 271-amino-acid polypeptide reads, in one-letter code: Formamidopyrimidine-DNA glycosylase (271 aa).

Pro2 functions as the Schiff-base intermediate with DNA in the catalytic mechanism. Glu3 serves as the catalytic Proton donor. Lys58 functions as the Proton donor; for beta-elimination activity in the catalytic mechanism. Residues His91, Arg110, and Arg152 each contribute to the DNA site. Residues 237–271 (LVYGREGQPCVHCGRPIRCETIGQRSSYFCTRCQR) form an FPG-type zinc finger. Catalysis depends on Arg261, which acts as the Proton donor; for delta-elimination activity.

Belongs to the FPG family. Monomer. Zn(2+) is required as a cofactor.

It catalyses the reaction Hydrolysis of DNA containing ring-opened 7-methylguanine residues, releasing 2,6-diamino-4-hydroxy-5-(N-methyl)formamidopyrimidine.. It carries out the reaction 2'-deoxyribonucleotide-(2'-deoxyribose 5'-phosphate)-2'-deoxyribonucleotide-DNA = a 3'-end 2'-deoxyribonucleotide-(2,3-dehydro-2,3-deoxyribose 5'-phosphate)-DNA + a 5'-end 5'-phospho-2'-deoxyribonucleoside-DNA + H(+). In terms of biological role, involved in base excision repair of DNA damaged by oxidation or by mutagenic agents. Acts as a DNA glycosylase that recognizes and removes damaged bases. Has a preference for oxidized purines, such as 7,8-dihydro-8-oxoguanine (8-oxoG). Has AP (apurinic/apyrimidinic) lyase activity and introduces nicks in the DNA strand. Cleaves the DNA backbone by beta-delta elimination to generate a single-strand break at the site of the removed base with both 3'- and 5'-phosphates. In Syntrophotalea carbinolica (strain DSM 2380 / NBRC 103641 / GraBd1) (Pelobacter carbinolicus), this protein is Formamidopyrimidine-DNA glycosylase.